A 318-amino-acid polypeptide reads, in one-letter code: DNA-directed RNA polymerase subunit alpha 2 (318 aa).

Positions Met-1–Glu-227 are alpha N-terminal domain (alpha-NTD). The segment at Ile-242–Leu-318 is alpha C-terminal domain (alpha-CTD).

The protein belongs to the RNA polymerase alpha chain family. Homodimer. The RNAP catalytic core consists of 2 alpha, 1 beta, 1 beta' and 1 omega subunit. When a sigma factor is associated with the core the holoenzyme is formed, which can initiate transcription.

The catalysed reaction is RNA(n) + a ribonucleoside 5'-triphosphate = RNA(n+1) + diphosphate. DNA-dependent RNA polymerase catalyzes the transcription of DNA into RNA using the four ribonucleoside triphosphates as substrates. This Francisella tularensis subsp. novicida (strain U112) protein is DNA-directed RNA polymerase subunit alpha 2.